We begin with the raw amino-acid sequence, 471 residues long: Glutamyl-tRNA(Gln) amidotransferase subunit A, mitochondrial (471 aa).

Catalysis depends on charge relay system residues Lys64 and Ser141. Catalysis depends on Ser165, which acts as the Acyl-ester intermediate.

Belongs to the amidase family. GatA subfamily. In terms of assembly, subunit of the heterotrimeric GatCAB amidotransferase (AdT) complex, composed of A, B and C subunits.

It is found in the mitochondrion. The catalysed reaction is L-glutamyl-tRNA(Gln) + L-glutamine + ATP + H2O = L-glutaminyl-tRNA(Gln) + L-glutamate + ADP + phosphate + H(+). In terms of biological role, allows the formation of correctly charged Gln-tRNA(Gln) through the transamidation of misacylated Glu-tRNA(Gln) in the mitochondria. The reaction takes place in the presence of glutamine and ATP through an activated gamma-phospho-Glu-tRNA(Gln). The sequence is that of Glutamyl-tRNA(Gln) amidotransferase subunit A, mitochondrial from Schizosaccharomyces pombe (strain 972 / ATCC 24843) (Fission yeast).